The sequence spans 270 residues: Undecaprenyl-diphosphatase (270 aa).

8 helical membrane-spanning segments follow: residues 1–21 (MDLFNAAILALIQGITEFLPI), 39–59 (QGLVFDIAANSGSLAAVMLYF), 87–107 (SHLVLQLALATIPVGLVGLAC), 114–134 (VARDPMIIATTSILFGLLLWW), 147–167 (ALSWRQVGIIGIAQAFALIPG), 193–213 (FLMAIPVGILAALLDLKDLFA), 223–243 (FLGVGFCVSGLSAYMVIHGLL), and 250–270 (TMTPFVVYRVVLGVVIFATLG).

It belongs to the UppP family.

The protein resides in the cell inner membrane. The catalysed reaction is di-trans,octa-cis-undecaprenyl diphosphate + H2O = di-trans,octa-cis-undecaprenyl phosphate + phosphate + H(+). Catalyzes the dephosphorylation of undecaprenyl diphosphate (UPP). Confers resistance to bacitracin. The sequence is that of Undecaprenyl-diphosphatase from Magnetococcus marinus (strain ATCC BAA-1437 / JCM 17883 / MC-1).